We begin with the raw amino-acid sequence, 78 residues long: Beta-defensin 105A (78 aa).

Residues 1 to 27 (MALIRKTFYFVFAVFFILVQQPSGCQA) form the signal peptide. Disulfide bonds link Cys43-Cys74, Cys53-Cys67, and Cys57-Cys73.

The protein belongs to the beta-defensin family.

Its subcellular location is the secreted. In terms of biological role, has antimicrobial activity. The sequence is that of Beta-defensin 105A (DEFB105A) from Macaca fascicularis (Crab-eating macaque).